Here is a 197-residue protein sequence, read N- to C-terminus: Dephospho-CoA kinase (197 aa).

The region spanning Arg-4–Ala-197 is the DPCK domain. An ATP-binding site is contributed by Gly-12–Thr-17.

This sequence belongs to the CoaE family.

The protein localises to the cytoplasm. The enzyme catalyses 3'-dephospho-CoA + ATP = ADP + CoA + H(+). The protein operates within cofactor biosynthesis; coenzyme A biosynthesis; CoA from (R)-pantothenate: step 5/5. In terms of biological role, catalyzes the phosphorylation of the 3'-hydroxyl group of dephosphocoenzyme A to form coenzyme A. This Ruegeria pomeroyi (strain ATCC 700808 / DSM 15171 / DSS-3) (Silicibacter pomeroyi) protein is Dephospho-CoA kinase.